A 221-amino-acid polypeptide reads, in one-letter code: N-acetyltransferase 8F1 (221 aa).

A helical membrane pass occupies residues 53–73 (LVLVSGSWLLAVVCIFFLLLL). In terms of domain architecture, N-acetyltransferase spans 69–219 (FLLLLLRFLA…RTIQLKYPFP (151 aa)).

The protein belongs to the camello family.

Its subcellular location is the membrane. May play a role in regulation of gastrulation. In Rattus norvegicus (Rat), this protein is N-acetyltransferase 8F1.